A 156-amino-acid polypeptide reads, in one-letter code: D-aminoacyl-tRNA deacylase (156 aa).

The short motif at 137-138 (GP) is the Gly-cisPro motif, important for rejection of L-amino acids element.

Belongs to the DTD family. Homodimer.

Its subcellular location is the cytoplasm. The catalysed reaction is glycyl-tRNA(Ala) + H2O = tRNA(Ala) + glycine + H(+). The enzyme catalyses a D-aminoacyl-tRNA + H2O = a tRNA + a D-alpha-amino acid + H(+). An aminoacyl-tRNA editing enzyme that deacylates mischarged D-aminoacyl-tRNAs. Also deacylates mischarged glycyl-tRNA(Ala), protecting cells against glycine mischarging by AlaRS. Acts via tRNA-based rather than protein-based catalysis; rejects L-amino acids rather than detecting D-amino acids in the active site. By recycling D-aminoacyl-tRNA to D-amino acids and free tRNA molecules, this enzyme counteracts the toxicity associated with the formation of D-aminoacyl-tRNA entities in vivo and helps enforce protein L-homochirality. In Ruegeria sp. (strain TM1040) (Silicibacter sp.), this protein is D-aminoacyl-tRNA deacylase.